Reading from the N-terminus, the 399-residue chain is Serine/threonine-protein kinase PKZ1 (399 aa).

The tract at residues Pro-30 to Arg-50 is disordered. Positions Trp-92–Met-371 constitute a Protein kinase domain. Residues Ile-98 to Val-106 and Lys-121 each bind ATP. Residue Asp-219 is the Proton acceptor of the active site.

It belongs to the protein kinase superfamily. CAMK Ser/Thr protein kinase family. In terms of assembly, interacts with BZP1.

The catalysed reaction is L-seryl-[protein] + ATP = O-phospho-L-seryl-[protein] + ADP + H(+). It catalyses the reaction L-threonyl-[protein] + ATP = O-phospho-L-threonyl-[protein] + ADP + H(+). In terms of biological role, may regulate an early stage of the zoospore pathway. The chain is Serine/threonine-protein kinase PKZ1 from Phytophthora infestans (Potato late blight agent).